The primary structure comprises 1732 residues: Lys-gingipain W83 (1732 aa).

An N-terminal signal peptide occupies residues 1 to 24 (MRKLLLLIAASLLGVGLYAQSAKI). A propeptide spanning residues 25–228 (KLDAPTTRTT…ETAYKQLFNR (204 aa)) is cleaved from the precursor. Positions 313, 337, 339, 341, and 343 each coordinate Ca(2+). His444 functions as the Proton donor in the catalytic mechanism. The active-site Nucleophile is the Cys477. Residues Phe482 and Glu491 each coordinate Ca(2+). Positions 965 to 988 (DAPNGTPNPNPNPNPNPGTTLSES) are disordered. Over residues 970 to 980 (TPNPNPNPNPN) the composition is skewed to pro residues. Ca(2+) is bound by residues Ser988, Glu990, Asp1001, Asp1003, Asp1005, His1007, Ser1022, Gly1024, Asn1043, Asp1146, Glu1147, Asp1433, Glu1435, Asp1446, Asp1448, Asp1450, Asn1452, Ser1470, Ile1472, Asn1490, and Asp1595.

The protein belongs to the peptidase C25 family. In terms of processing, proteolytically cleaved into a catalytic subunit and three adhesins. Arg-gingipain is involved in this post-translational processing.

It is found in the secreted. The catalysed reaction is Endopeptidase with strict specificity for lysyl bonds.. In terms of biological role, cysteine proteinase with a strong preference for substrates with Lys in the P1 position. Hydrolyzes bovine hemoglobin, bovine serum albumin, casein, human placental type I collagen and human IgA and IgG. Disrupts the functions of polymorphonuclear leukocytes. May act as a virulence factor in the development of peridontal disease. Involved in the coaggregation of P.gingivalis with other oral bacteria. Has hemolytic activity; this is mediated by the adhesin domains and does not require the catalytic domain. In Porphyromonas gingivalis (Bacteroides gingivalis), this protein is Lys-gingipain W83.